We begin with the raw amino-acid sequence, 228 residues long: L-ribulose-5-phosphate 4-epimerase UlaF (228 aa).

Substrate is bound by residues Gly26–Asn27, Ser43–Gly44, and Ser72–Ser73. Positions 74, 93, and 95 each coordinate Zn(2+). The Proton donor/acceptor role is filled by Asp118. His167 is a binding site for Zn(2+). The active-site Proton donor/acceptor is the Tyr225.

It belongs to the aldolase class II family. AraD/FucA subfamily. The cofactor is Zn(2+).

The catalysed reaction is L-ribulose 5-phosphate = D-xylulose 5-phosphate. The protein operates within cofactor degradation; L-ascorbate degradation; D-xylulose 5-phosphate from L-ascorbate: step 4/4. Functionally, catalyzes the isomerization of L-ribulose 5-phosphate to D-xylulose 5-phosphate. Is involved in the anaerobic L-ascorbate utilization. The chain is L-ribulose-5-phosphate 4-epimerase UlaF from Shigella flexneri.